Here is a 182-residue protein sequence, read N- to C-terminus: Caltractin ICL1b (182 aa).

Positions 1–31 are disordered; it reads MSRRGQQPPPQQQQAPPQKNQAGKFNPAEFV. 4 consecutive EF-hand domains span residues 38-73, 74-109, 111-146, and 147-182; these read EEVL…LGFE, AKNQ…RISE, DSKA…LGET, and MDDS…KTFA. Ca(2+) is bound by residues Asp-51, Asp-53, Thr-55, Ser-57, Glu-62, Asp-87, Asp-89, Ser-91, Gln-93, and Glu-98.

It belongs to the centrin family.

It is found in the cytoplasm. The protein resides in the cytoskeleton. Functionally, plays a fundamental role in microtubule organizing center structure and function. Component of the infraciliary lattice (ICL) and the ciliary basal bodies. The chain is Caltractin ICL1b (Icl1b) from Paramecium tetraurelia.